Consider the following 202-residue polypeptide: Casparian strip membrane protein 4 (202 aa).

The Cytoplasmic segment spans residues 1 to 40; that stretch reads MKSDSIAVDVPAESSSAIKGKAPLLGLARDHTGSGGYKRG. The chain crosses the membrane as a helical span at residues 41 to 61; sequence LSIFDFLLRLAAIVAALAAAA. Over 62–90 the chain is Extracellular; that stretch reads TMGTSDETLPFFTQFLQFEASYDDLPTFQ. A helical transmembrane segment spans residues 91–111; it reads FFVVAIAIVTGYLVLSLPFSV. At 112–130 the chain is on the cytoplasmic side; it reads VTIVRPLAVAPRLLLLVLD. Residues 131 to 151 form a helical membrane-spanning segment; it reads TAALALDTAAASAAAAIVYLA. Topologically, residues 152–176 are extracellular; it reads HNGNTNTNWLPICQQFGDFCQKTSG. The chain crosses the membrane as a helical span at residues 177–197; it reads AVVSAFASVTFLAILVVISGV. At 198-202 the chain is on the cytoplasmic side; the sequence is SLKRP.

Belongs to the Casparian strip membrane proteins (CASP) family. In terms of assembly, homodimer and heterodimers.

Its subcellular location is the cell membrane. Regulates membrane-cell wall junctions and localized cell wall deposition. Required for establishment of the Casparian strip membrane domain (CSD) and the subsequent formation of Casparian strips, a cell wall modification of the root endodermis that determines an apoplastic barrier between the intraorganismal apoplasm and the extraorganismal apoplasm and prevents lateral diffusion. This is Casparian strip membrane protein 4 from Arabidopsis lyrata subsp. lyrata (Lyre-leaved rock-cress).